The chain runs to 195 residues: Probable GTP-binding protein EngB (195 aa).

The region spanning 24 to 195 is the EngB-type G domain; that stretch reads GLSEVGLSGR…QIWNVIEKYL (172 aa). GTP-binding positions include 32–39, 59–63, 77–80, 144–147, and 176–178; these read GRSNVGKS, GKTQT, DVPG, TKED, and YSS. S39 and T61 together coordinate Mg(2+).

It belongs to the TRAFAC class TrmE-Era-EngA-EngB-Septin-like GTPase superfamily. EngB GTPase family. Requires Mg(2+) as cofactor.

Its function is as follows. Necessary for normal cell division and for the maintenance of normal septation. The sequence is that of Probable GTP-binding protein EngB from Staphylococcus saprophyticus subsp. saprophyticus (strain ATCC 15305 / DSM 20229 / NCIMB 8711 / NCTC 7292 / S-41).